A 415-amino-acid polypeptide reads, in one-letter code: Dihydroorotase (415 aa).

Positions 54 and 56 each coordinate Zn(2+). Substrate-binding positions include 56 to 58 and Asn-88; that span reads HFR. Lys-136, His-169, His-217, and Asp-278 together coordinate Zn(2+). At Lys-136 the chain carries N6-carboxylysine. The active site involves Asp-278. His-282 is a binding site for substrate.

It belongs to the metallo-dependent hydrolases superfamily. DHOase family. Class I DHOase subfamily. Zn(2+) serves as cofactor.

It catalyses the reaction (S)-dihydroorotate + H2O = N-carbamoyl-L-aspartate + H(+). It participates in pyrimidine metabolism; UMP biosynthesis via de novo pathway; (S)-dihydroorotate from bicarbonate: step 3/3. Its function is as follows. Catalyzes the reversible cyclization of carbamoyl aspartate to dihydroorotate. The chain is Dihydroorotase from Thermoplasma volcanium (strain ATCC 51530 / DSM 4299 / JCM 9571 / NBRC 15438 / GSS1).